A 90-amino-acid chain; its full sequence is Large ribosomal subunit protein uL23c (90 aa).

The protein belongs to the universal ribosomal protein uL23 family. In terms of assembly, part of the 50S ribosomal subunit.

It is found in the plastid. The protein localises to the chloroplast. Its function is as follows. Binds to 23S rRNA. In Tetradesmus obliquus (Green alga), this protein is Large ribosomal subunit protein uL23c (rpl23).